A 90-amino-acid chain; its full sequence is Probable Fe(2+)-trafficking protein (90 aa).

This sequence belongs to the Fe(2+)-trafficking protein family.

Its function is as follows. Could be a mediator in iron transactions between iron acquisition and iron-requiring processes, such as synthesis and/or repair of Fe-S clusters in biosynthetic enzymes. The protein is Probable Fe(2+)-trafficking protein of Dechloromonas aromatica (strain RCB).